We begin with the raw amino-acid sequence, 130 residues long: Phosphomevalonate dehydratase small subunit (130 aa).

Ser62 serves as the catalytic Proton acceptor.

Belongs to the AcnX type II small subunit family. Heterodimer composed of a large subunit (PMDh-L) and a small subunit (PMDh-S).

The catalysed reaction is (R)-5-phosphomevalonate = (2E)-3-methyl-5-phosphooxypent-2-enoate + H2O. It functions in the pathway isoprenoid biosynthesis; isopentenyl diphosphate biosynthesis via mevalonate pathway. Its function is as follows. Component of a hydro-lyase that catalyzes the dehydration of mevalonate 5-phosphate (MVA5P) to form trans-anhydromevalonate 5-phosphate (tAHMP). Involved in the archaeal mevalonate (MVA) pathway, which provides fundamental precursors for isoprenoid biosynthesis, such as isopentenyl diphosphate (IPP) and dimethylallyl diphosphate (DMAPP). This Pyrococcus abyssi (strain GE5 / Orsay) protein is Phosphomevalonate dehydratase small subunit.